We begin with the raw amino-acid sequence, 2357 residues long: Myosin-I heavy chain (2357 aa).

In terms of domain architecture, Myosin motor spans 13–688 (QPVEDMITLP…QYLKLEELRK (676 aa)). 106–113 (GESGAGKT) is a binding site for ATP. The segment at 579 to 586 (YVRCIKPN) is actin-binding. In terms of domain architecture, IQ spans 691–720 (LLKKVTLIQSVWRMYRCKKRYQQIRASAKI). Positions 787-891 (KRDRNARMLE…QDKNINELDD (105 aa)) form a coiled coil. The binding to talin A stretch occupies residues 787-1076 (KRDRNARMLE…PILGAPPPPP (290 aa)). Disordered regions lie at residues 797–852 (IQRE…EEEL) and 974–1112 (ASSF…NPQP). 2 stretches are compositionally biased toward low complexity: residues 1003 to 1025 (NNNY…SDFS) and 1078 to 1106 (TSDS…QSTN). The MyTH4 1 domain maps to 1155-1313 (YQKSHIKSSL…PSVTELESIK (159 aa)). Positions 1318–1620 (IFVRITATDG…EYSLYLRNNA (303 aa)) constitute an FERM 1 domain. One can recognise an SH3 domain in the interval 1618–1678 (NNAKYARALK…PVDHVEILLS (61 aa)). Residues 1686-1849 (VHPVATLSPP…PSKRLTVSPA (164 aa)) form a disordered region. The segment covering 1706–1733 (TPPPPPSISDSMSPPPQVGMLPPPPPPS) has biased composition (pro residues). 2 stretches are compositionally biased toward low complexity: residues 1734 to 1746 (VMGS…IPSL) and 1755 to 1770 (SSNS…SPMM). Residues 1817-1828 (FRSSLRVSMLNT) are compositionally biased toward polar residues. The MyTH4 2 domain maps to 1894-2051 (FNKDPIKESL…PSATEIQSFR (158 aa)). Positions 2060-2357 (STCKIRFIDQ…ASVYQFYSSQ (298 aa)) constitute an FERM 2 domain.

The protein belongs to the TRAFAC class myosin-kinesin ATPase superfamily. Myosin family. Monomer. Interacts with talA.

The protein resides in the cytoplasm. In terms of biological role, myosins are actin-based motor molecules with ATPase activity. Involved in the early steps of phagocytosis and adhesion. The polypeptide is Myosin-I heavy chain (myoI) (Dictyostelium discoideum (Social amoeba)).